The chain runs to 277 residues: Ribosomal RNA small subunit methyltransferase G (277 aa).

Residues glycine 128, phenylalanine 133, 188–189, and arginine 198 each bind S-adenosyl-L-methionine; that span reads SE.

The protein belongs to the methyltransferase superfamily. RNA methyltransferase RsmG family.

The protein resides in the cytoplasm. The catalysed reaction is guanosine(527) in 16S rRNA + S-adenosyl-L-methionine = N(7)-methylguanosine(527) in 16S rRNA + S-adenosyl-L-homocysteine. Its function is as follows. Specifically methylates the N7 position of guanine in position 527 of 16S rRNA. The sequence is that of Ribosomal RNA small subunit methyltransferase G from Nitrobacter winogradskyi (strain ATCC 25391 / DSM 10237 / CIP 104748 / NCIMB 11846 / Nb-255).